We begin with the raw amino-acid sequence, 199 residues long: Shikimate kinase (199 aa).

Residue 12 to 17 (GAGKST) participates in ATP binding. Ser16 contributes to the Mg(2+) binding site. Substrate-binding residues include Asp34, Arg58, and Gly80. Arg117 serves as a coordination point for ATP. Arg136 contacts substrate. The disordered stretch occupies residues 174 to 199 (VSGGDRKSSEAERSGAPLRKSSEVVK). Residues 177–186 (GDRKSSEAER) show a composition bias toward basic and acidic residues.

Belongs to the shikimate kinase family. As to quaternary structure, monomer. Mg(2+) is required as a cofactor.

Its subcellular location is the cytoplasm. It catalyses the reaction shikimate + ATP = 3-phosphoshikimate + ADP + H(+). It functions in the pathway metabolic intermediate biosynthesis; chorismate biosynthesis; chorismate from D-erythrose 4-phosphate and phosphoenolpyruvate: step 5/7. Catalyzes the specific phosphorylation of the 3-hydroxyl group of shikimic acid using ATP as a cosubstrate. This is Shikimate kinase from Mycobacterium leprae (strain TN).